Consider the following 525-residue polypeptide: Ribosomal protein S6 kinase beta-1 (525 aa).

The disordered stretch occupies residues 1 to 54 (MRRRRRRDGFYPAPDFRDREAEDMAGVFDIDLDQPEDAGSEDELEEGGQLNESM). The TOS motif signature appears at 28–32 (FDIDL). Residues 30–46 (IDLDQPEDAGSEDELEE) are compositionally biased toward acidic residues. A Protein kinase domain is found at 91–352 (FELLRVLGKG…AGEVQAHPFF (262 aa)). Residues 97–105 (LGKGGYGKV) and Lys-123 each bind ATP. Asp-218 functions as the Proton acceptor in the catalytic mechanism. Phosphothreonine; by PDPK1 is present on Thr-252. Positions 353–423 (RHINWEELLA…VAPSVLESVK (71 aa)) constitute an AGC-kinase C-terminal domain. The interval 380–399 (SQFDSKFTRQTPVDSPDDST) is disordered. Polar residues predominate over residues 381-399 (QFDSKFTRQTPVDSPDDST). Position 394 is a phosphoserine (Ser-394). Thr-412 carries the phosphothreonine; by MTOR, NEK6 and NEK7 modification. Residues 424–525 (EKFSFEPKIR…KRPEHLRMNL (102 aa)) form an autoinhibitory domain region. Phosphoserine is present on residues Ser-434 and Ser-441. Thr-444 is modified (phosphothreonine). Ser-447 and Ser-452 each carry phosphoserine. Lys-516 carries the post-translational modification N6-acetyllysine.

This sequence belongs to the protein kinase superfamily. AGC Ser/Thr protein kinase family. S6 kinase subfamily. As to quaternary structure, interacts with PPP1R9A/neurabin-1. Interacts with RPTOR. Interacts with IRS1. Interacts with EIF3B and EIF3C. Interacts with TRAF4. Interacts with POLDIP3. Interacts (via N-terminus) with IER5. In terms of assembly, (Microbial infection) Interacts with Mumps virus phosphoprotein; this interaction may play a role in the viral replication and transcription. Phosphorylation at Thr-412 is regulated by mTORC1. The phosphorylation at this site is maintained by an agonist-dependent autophosphorylation mechanism. Activated by phosphorylation at Thr-252 by PDPK1. Dephosphorylation by PPP1CC at Thr-412 in mitochondrion. In terms of tissue distribution, widely expressed.

It localises to the synapse. The protein resides in the synaptosome. Its subcellular location is the mitochondrion outer membrane. The protein localises to the mitochondrion. It is found in the nucleus. It localises to the cytoplasm. It catalyses the reaction L-seryl-[protein] + ATP = O-phospho-L-seryl-[protein] + ADP + H(+). The catalysed reaction is L-threonyl-[protein] + ATP = O-phospho-L-threonyl-[protein] + ADP + H(+). Its activity is regulated as follows. Activation requires multiple phosphorylation events on serine/threonine residues. Activation appears to be first mediated by phosphorylation of multiple sites in the autoinhibitory domain, which facilitates phosphorylation at Thr-412, disrupting the autoinhibitory mechanism and allowing phosphorylation of Thr-252 by PDPK1. The active conformation of the kinase is believed to be stabilized by a mechanism involving three conserved phosphorylation sites located in the kinase domain activation loop (Thr-252) and in the AGC-kinase C-terminal domain (Ser-394 in the middle of the tail/linker region and Thr-412 within a hydrophobic motif at its end). Activated by mTORC1; isoform Alpha I and isoform Alpha II are sensitive to rapamycin, which inhibits activating phosphorylation at Thr-412. Activated by PDPK1. In terms of biological role, serine/threonine-protein kinase that acts downstream of mTOR signaling in response to growth factors and nutrients to promote cell proliferation, cell growth and cell cycle progression. Regulates protein synthesis through phosphorylation of EIF4B, RPS6 and EEF2K, and contributes to cell survival by repressing the pro-apoptotic function of BAD. Under conditions of nutrient depletion, the inactive form associates with the EIF3 translation initiation complex. Upon mitogenic stimulation, phosphorylation by the mechanistic target of rapamycin complex 1 (mTORC1) leads to dissociation from the EIF3 complex and activation. The active form then phosphorylates and activates several substrates in the pre-initiation complex, including the EIF2B complex and the cap-binding complex component EIF4B. Also controls translation initiation by phosphorylating a negative regulator of EIF4A, PDCD4, targeting it for ubiquitination and subsequent proteolysis. Promotes initiation of the pioneer round of protein synthesis by phosphorylating POLDIP3/SKAR. In response to IGF1, activates translation elongation by phosphorylating EEF2 kinase (EEF2K), which leads to its inhibition and thus activation of EEF2. Also plays a role in feedback regulation of mTORC2 by mTORC1 by phosphorylating MAPKAP1/SIN1, MTOR and RICTOR, resulting in the inhibition of mTORC2 and AKT1 signaling. Also involved in feedback regulation of mTORC1 and mTORC2 by phosphorylating DEPTOR. Mediates cell survival by phosphorylating the pro-apoptotic protein BAD and suppressing its pro-apoptotic function. Phosphorylates mitochondrial URI1 leading to dissociation of a URI1-PPP1CC complex. The free mitochondrial PPP1CC can then dephosphorylate RPS6KB1 at Thr-412, which is proposed to be a negative feedback mechanism for the RPS6KB1 anti-apoptotic function. Mediates TNF-alpha-induced insulin resistance by phosphorylating IRS1 at multiple serine residues, resulting in accelerated degradation of IRS1. In cells lacking functional TSC1-2 complex, constitutively phosphorylates and inhibits GSK3B. May be involved in cytoskeletal rearrangement through binding to neurabin. Phosphorylates and activates the pyrimidine biosynthesis enzyme CAD, downstream of MTOR. Following activation by mTORC1, phosphorylates EPRS and thereby plays a key role in fatty acid uptake by adipocytes and also most probably in interferon-gamma-induced translation inhibition. The sequence is that of Ribosomal protein S6 kinase beta-1 (RPS6KB1) from Homo sapiens (Human).